The sequence spans 448 residues: 5-hydroxytryptamine receptor 7 (448 aa).

Residues 1–86 (MMDVNSSGRP…INYGRVEKVV (86 aa)) are Extracellular-facing. 2 N-linked (GlcNAc...) asparagine glycosylation sites follow: N5 and N69. Residues 87 to 111 (IGSILTLITLLTIAGNCLVVISVCF) traverse the membrane as a helical segment. The Cytoplasmic portion of the chain corresponds to 112–121 (VKKLRQPSNY). The helical transmembrane segment at 122-143 (LIVSLALADLSVAVAVMPFVSV) threads the bilayer. Residues 144–155 (TDLIGGKWIFGH) lie on the Extracellular side of the membrane. The helical transmembrane segment at 156-181 (FFCNVFIAMDVMCCTASIMTLCVISI) threads the bilayer. The cysteines at positions 158 and 234 are disulfide-linked. D165 serves as a coordination point for serotonin. The Cytoplasmic portion of the chain corresponds to 182-201 (DRYLGITRPLTYPVRQNGKC). The helical transmembrane segment at 202 to 222 (MAKMILSVWLLSASITLPPLF) threads the bilayer. The Extracellular segment spans residues 223 to 240 (GWAQNVNDDKVCLISQDF). A helical membrane pass occupies residues 241-263 (GYTIYSTAVAFYIPMSVMLFMYY). The Cytoplasmic portion of the chain corresponds to 264–329 (QIYKAARKSA…SIFKREQKAA (66 aa)). A helical transmembrane segment spans residues 330 to 355 (TTLGIIVGAFTVCWLPFFLLSTARPF). At 356 to 366 (ICGTSCSCIPL) the chain is on the extracellular side. The chain crosses the membrane as a helical span at residues 367–390 (WVERTCLWLGYANSLINPFIYAFF). At 391 to 448 (NRDLRTTYRSLLQCQYRNINRKLSAAGMHEALKLAERPERSEFVLQNCDHCGKKGHDT) the chain is on the cytoplasmic side. Residue C404 is the site of S-palmitoyl cysteine attachment.

This sequence belongs to the G-protein coupled receptor 1 family.

It is found in the cell membrane. In terms of biological role, G-protein coupled receptor for 5-hydroxytryptamine (serotonin), a biogenic hormone that functions as a neurotransmitter, a hormone and a mitogen. Ligand binding causes a conformation change that triggers signaling via guanine nucleotide-binding proteins (G proteins) and modulates the activity of downstream effectors. HTR7 is coupled to G(s) G alpha proteins and mediates activation of adenylate cyclase activity. The chain is 5-hydroxytryptamine receptor 7 (Htr7) from Mus musculus (Mouse).